A 57-amino-acid polypeptide reads, in one-letter code: Zinc finger protein MJ0458.1 (57 aa).

4 consecutive short sequence motifs (c(P)XCG motif) follow at residues 8–12 (CISCN), 26–30 (CPNCG), 37–41 (CERCR), and 49–53 (CPKCG). Residues Cys-26 and Cys-29 each coordinate Zn(2+). 2 residues coordinate Zn(2+): Cys-49 and Cys-52.

In terms of assembly, monomer in solution.

Zinc-binding protein that binds only one zinc ion. This is Zinc finger protein MJ0458.1 from Methanocaldococcus jannaschii (strain ATCC 43067 / DSM 2661 / JAL-1 / JCM 10045 / NBRC 100440) (Methanococcus jannaschii).